A 94-amino-acid chain; its full sequence is Prepro-gonadotropin-releasing hormone-like protein (94 aa).

A signal peptide spans 1 to 21 (MNACILLTTLVTMITIEKVQG).

It is found in the secreted. Functionally, neuropeptide involved in reproduction. May be an important hormone in the regulation of gonadal maturation. The sequence is that of Prepro-gonadotropin-releasing hormone-like protein from Ruditapes philippinarum (Japanese carpet shell).